Reading from the N-terminus, the 583-residue chain is NudC domain-containing protein 1 (583 aa).

Phosphoserine is present on Ser8. The CS domain occupies 273-361 (IKEPLYYWQQ…NEGLTWPELV (89 aa)). The residue at position 388 (Ser388) is a Phosphoserine.

In terms of tissue distribution, isoform 1 is specifically expressed in leukemias and a variety of solid tumor cell lines and is also detected in testis and heart. Isoform 2 is predominantly expressed in testis and weakly expressed in tumor cells.

The protein resides in the cytoplasm. Its subcellular location is the nucleus. The chain is NudC domain-containing protein 1 from Homo sapiens (Human).